The sequence spans 369 residues: Actin-related protein T3 (369 aa).

It belongs to the actin family. Interacts with PFN3. Testis specific (at protein level). Expressed specifically in haploid germ cells.

Its subcellular location is the cytoplasm. It localises to the cytoskeleton. The protein resides in the nucleus. The polypeptide is Actin-related protein T3 (Actrt3) (Mus musculus (Mouse)).